The sequence spans 160 residues: Sec-independent protein translocase protein TatB (160 aa).

A helical membrane pass occupies residues 1 to 21 (MFGMGFFEILVVLVVAIIFLG). The interval 118-160 (HLNEEVSNEEALNKEVSSDESPKEVQLATDNNTKEHDKEKENV) is disordered. Composition is skewed to basic and acidic residues over residues 128 to 140 (ALNK…ESPK) and 149 to 160 (NTKEHDKEKENV).

Belongs to the TatB family. In terms of assembly, the Tat system comprises two distinct complexes: a TatABC complex, containing multiple copies of TatA, TatB and TatC subunits, and a separate TatA complex, containing only TatA subunits. Substrates initially bind to the TatABC complex, which probably triggers association of the separate TatA complex to form the active translocon.

The protein resides in the cell inner membrane. In terms of biological role, part of the twin-arginine translocation (Tat) system that transports large folded proteins containing a characteristic twin-arginine motif in their signal peptide across membranes. Together with TatC, TatB is part of a receptor directly interacting with Tat signal peptides. TatB may form an oligomeric binding site that transiently accommodates folded Tat precursor proteins before their translocation. The protein is Sec-independent protein translocase protein TatB of Helicobacter pylori (strain ATCC 700392 / 26695) (Campylobacter pylori).